Consider the following 138-residue polypeptide: Putative pre-16S rRNA nuclease (138 aa).

This sequence belongs to the YqgF nuclease family.

The protein resides in the cytoplasm. In terms of biological role, could be a nuclease involved in processing of the 5'-end of pre-16S rRNA. In Salmonella schwarzengrund (strain CVM19633), this protein is Putative pre-16S rRNA nuclease.